A 423-amino-acid chain; its full sequence is tRNA(Met) cytidine acetate ligase (423 aa).

Residues 7–20 (VVEY…HLYH), G102, N165, and R190 contribute to the ATP site.

The protein belongs to the TmcAL family.

It localises to the cytoplasm. It catalyses the reaction cytidine(34) in elongator tRNA(Met) + acetate + ATP = N(4)-acetylcytidine(34) in elongator tRNA(Met) + AMP + diphosphate. Its function is as follows. Catalyzes the formation of N(4)-acetylcytidine (ac(4)C) at the wobble position of elongator tRNA(Met), using acetate and ATP as substrates. First activates an acetate ion to form acetyladenylate (Ac-AMP) and then transfers the acetyl group to tRNA to form ac(4)C34. The sequence is that of tRNA(Met) cytidine acetate ligase from Thermosipho africanus (strain TCF52B).